The chain runs to 272 residues: NH(3)-dependent NAD(+) synthetase (272 aa).

Residue 45 to 52 coordinates ATP; it reads GISGGQDS. Asp51 contacts Mg(2+). Position 138 (Arg138) interacts with deamido-NAD(+). Thr158 is an ATP binding site. Glu163 contributes to the Mg(2+) binding site. Positions 171 and 178 each coordinate deamido-NAD(+). ATP-binding residues include Lys187 and Thr209. Position 258–259 (258–259) interacts with deamido-NAD(+); sequence HK.

The protein belongs to the NAD synthetase family. In terms of assembly, homodimer.

It catalyses the reaction deamido-NAD(+) + NH4(+) + ATP = AMP + diphosphate + NAD(+) + H(+). The protein operates within cofactor biosynthesis; NAD(+) biosynthesis; NAD(+) from deamido-NAD(+) (ammonia route): step 1/1. Catalyzes the ATP-dependent amidation of deamido-NAD to form NAD. Uses ammonia as a nitrogen source. This Bacillus mycoides (strain KBAB4) (Bacillus weihenstephanensis) protein is NH(3)-dependent NAD(+) synthetase.